Reading from the N-terminus, the 218-residue chain is Adenylate kinase (218 aa).

ATP is bound at residue 10–15 (GAGKGT). Residues 30–59 (STGDMLRAAVKQGTPLGQEAKKVMDAGGLV) are NMP. AMP contacts are provided by residues T31, R36, 57-59 (GLV), 85-88 (GFPR), and Q92. The interval 122–159 (GRRVHPASGRSYHVRFNPPKQEGLDDVTGEPLVQRDDD) is LID. ATP contacts are provided by residues R123 and 132-133 (SY). AMP contacts are provided by R156 and R167. G203 is an ATP binding site.

It belongs to the adenylate kinase family. As to quaternary structure, monomer.

The protein resides in the cytoplasm. It catalyses the reaction AMP + ATP = 2 ADP. It functions in the pathway purine metabolism; AMP biosynthesis via salvage pathway; AMP from ADP: step 1/1. Catalyzes the reversible transfer of the terminal phosphate group between ATP and AMP. Plays an important role in cellular energy homeostasis and in adenine nucleotide metabolism. The polypeptide is Adenylate kinase (Bordetella petrii (strain ATCC BAA-461 / DSM 12804 / CCUG 43448)).